Here is a 116-residue protein sequence, read N- to C-terminus: Large ribosomal subunit protein uL18 (116 aa).

Belongs to the universal ribosomal protein uL18 family. In terms of assembly, part of the 50S ribosomal subunit; part of the 5S rRNA/L5/L18/L25 subcomplex. Contacts the 5S and 23S rRNAs.

This is one of the proteins that bind and probably mediate the attachment of the 5S RNA into the large ribosomal subunit, where it forms part of the central protuberance. This chain is Large ribosomal subunit protein uL18, found in Shewanella oneidensis (strain ATCC 700550 / JCM 31522 / CIP 106686 / LMG 19005 / NCIMB 14063 / MR-1).